Here is a 257-residue protein sequence, read N- to C-terminus: Ribosomal RNA small subunit methyltransferase J (257 aa).

Residues 107–108 (RD), 123–124 (ER), and D177 each bind S-adenosyl-L-methionine.

The protein belongs to the methyltransferase superfamily. RsmJ family.

The protein resides in the cytoplasm. The enzyme catalyses guanosine(1516) in 16S rRNA + S-adenosyl-L-methionine = N(2)-methylguanosine(1516) in 16S rRNA + S-adenosyl-L-homocysteine + H(+). In terms of biological role, specifically methylates the guanosine in position 1516 of 16S rRNA. The polypeptide is Ribosomal RNA small subunit methyltransferase J (Haemophilus influenzae (strain ATCC 51907 / DSM 11121 / KW20 / Rd)).